Here is a 71-residue protein sequence, read N- to C-terminus: Putative membrane protein insertion efficiency factor (71 aa).

The protein belongs to the UPF0161 family.

Its subcellular location is the cell membrane. Its function is as follows. Could be involved in insertion of integral membrane proteins into the membrane. The sequence is that of Putative membrane protein insertion efficiency factor from Clostridium acetobutylicum (strain ATCC 824 / DSM 792 / JCM 1419 / IAM 19013 / LMG 5710 / NBRC 13948 / NRRL B-527 / VKM B-1787 / 2291 / W).